The sequence spans 353 residues: Major outer membrane protein (353 aa).

An N-terminal signal peptide occupies residues 1 to 20 (MKKTIVALAVAAVAATSANA).

Disulfide bond interactions within and between MOMP molecules and other components form high molecular-weight oligomers.

It localises to the cell outer membrane. Its function is as follows. Structural rigidity of the outer membrane of elementary bodies and porin forming, permitting diffusion of solutes through the intracellular reticulate body membrane. This Pasteurella multocida protein is Major outer membrane protein (ompH).